An 868-amino-acid polypeptide reads, in one-letter code: Probable inorganic carbon transporter subunit DabA (868 aa).

Zn(2+) is bound by residues Cys-392, Asp-394, His-574, and Cys-589.

The protein belongs to the inorganic carbon transporter (TC 9.A.2) DabA family. As to quaternary structure, forms a complex with DabB. Zn(2+) is required as a cofactor.

The protein resides in the cell membrane. In terms of biological role, part of an energy-coupled inorganic carbon pump. This chain is Probable inorganic carbon transporter subunit DabA, found in Bacillus cereus (strain G9842).